A 154-amino-acid chain; its full sequence is MENEYDMKSIKEKGVDFEDLWFSSVSDEILDNPEDENGQPFTGLAYELYPNGQIIYFTKYKNGLAHGLTCEFYENGNKKSEKEYRYGQLHGISIIWFENGRKKSEQQYEHSILISEKNWDEEGNLLNKYEIDTDSPHFEILESRRETHINLGRE.

As to quaternary structure, probably interacts with cognate toxin YwqJ but not with other non-cognate LXG toxins. The interaction inhibits the toxic activity of YwqJ.

It is found in the cytoplasm. Functionally, immunity component of one of 6 LXG toxin-immunity modules in this strain. They promote kin selection, mediate competition in biofilms, and drive spatial segregation of different strains, indicating that LXG toxins may help avoid warfare between strains in biofilms. Mediates intercellular competition during biofilm formation; disruption of the operon disadvantages the bacteria, but overexpression of the cognate immunity protein restores growth in competition with wild-type. In situ neutralizes the toxic effect of cognate toxin YqcG. Probably neutralizes the ability to inhibit growth of cognate toxin YwqJ. Probably does not have immunity protein activity on other LXG toxins. The polypeptide is Immunity protein YwqK (ywqK) (Bacillus subtilis (strain 168)).